Consider the following 125-residue polypeptide: Aspercryptin biosynthesis cluster protein K (125 aa).

The segment at 104-125 (QRAESVAGDSRPREHRQGAVGY) is disordered. Residues 113-125 (SRPREHRQGAVGY) show a composition bias toward basic and acidic residues.

The protein operates within secondary metabolite biosynthesis. Part of the gene cluster that mediates the biosynthesis of aspercryptins, linear lipopeptides built from six amino acids including 2 highly unusual and nonproteogenic amino acids, 2-amino-octanoic acid (2aoa) and 2-amino-dodecanol (2adol). The core structure of aspercryptins is as follows: Ser/Ala-Thr-Ile/Val-2aoa-Asn-2adol. The first step of aspercryptin biosynthesis is the generation of the fatty acid precursors, octanoic and dodecanoic acids, by the FAS subunits atnF and atnM. The fatty acid precursors are likely transformed into the corresponding alpha-amino fatty acids in three steps. First, they are hydroxylated by the cytochrome P450 monooxygenase atnE, then oxidized to the corresponding alpha-keto acids by the NAD(P)-dependent oxidoreductase atnD, and finally converted to the alpha-amino fatty acids by the PLP-dependent aminotransferases atnH or atnJ. the alpha-amino fatty acids, 2-amino-octanoic and 2-amino-dodecanoic acids, are recognized, activated, and covalently tethered to the NRPS atnA by its fourth and sixth adenylation domains. The second module of atnA is the Thr module and contains an epimerase (E) domain responsible for the epimerization of Thr to D-allo-Thr. Additionally, despite atnA having only one epimerase domain, the first amino acid of aspercryptin A1 is D-Ser, suggesting that serine is either loaded directly as D-Ser on the first module or that the epimerase domain in the threonine module epimerizes both L-Ser and L-Thr. After condensation of the hexapeptide of aspercryptin, the C-terminal reductase (TE) domain might be involved in the reductive release and production of the aldehyde hexapeptide. Further reduction would generate aspercryptins. The variety of aspercryptins produced reflects the flexibility of the atnA NRPS, allowing incorporation of alanine instead of serine, valine for isoleucine, and a C10 fatty amino alcohol instead of the C12 version. AtnB seems to be involved in the selectivity for Ile versus Val by the third module. Moreover, type B, C and D aspercryptins have an additional N-terminal cichorine, acetyl and propionyl group respectively. The sequence is that of Aspercryptin biosynthesis cluster protein K from Emericella nidulans (strain FGSC A4 / ATCC 38163 / CBS 112.46 / NRRL 194 / M139) (Aspergillus nidulans).